Here is a 185-residue protein sequence, read N- to C-terminus: Putative F-box protein At3g17400 (185 aa).

Residues 1 to 47 enclose the F-box domain; that stretch reads MMTLSDLPSDLAEEVLSKIPVTSLRGVRATCKKWNTLSKDRSFTRKH.

The sequence is that of Putative F-box protein At3g17400 from Arabidopsis thaliana (Mouse-ear cress).